A 431-amino-acid chain; its full sequence is Trigger factor (431 aa).

The PPIase FKBP-type domain occupies 161–246 (DDRVTIDFVG…LKKVENIVLP (86 aa)).

The protein belongs to the FKBP-type PPIase family. Tig subfamily.

The protein resides in the cytoplasm. It carries out the reaction [protein]-peptidylproline (omega=180) = [protein]-peptidylproline (omega=0). Functionally, involved in protein export. Acts as a chaperone by maintaining the newly synthesized protein in an open conformation. Functions as a peptidyl-prolyl cis-trans isomerase. The chain is Trigger factor from Glaesserella parasuis serovar 5 (strain SH0165) (Haemophilus parasuis).